Reading from the N-terminus, the 177-residue chain is SPbeta prophage-derived uncharacterized protein YopI (177 aa).

The helical transmembrane segment at 11 to 31 (FEGIIGALLGVIVTLILTHIL) threads the bilayer.

The protein localises to the cell membrane. This Bacillus subtilis (strain 168) protein is SPbeta prophage-derived uncharacterized protein YopI (yopI).